We begin with the raw amino-acid sequence, 151 residues long: Large ribosomal subunit protein eL8 (151 aa).

The protein belongs to the eukaryotic ribosomal protein eL8 family. Part of the 50S ribosomal subunit. Probably part of the RNase P complex.

It is found in the cytoplasm. Functionally, multifunctional RNA-binding protein that recognizes the K-turn motif in ribosomal RNA, the RNA component of RNase P, box H/ACA, box C/D and box C'/D' sRNAs. This Pyrobaculum neutrophilum (strain DSM 2338 / JCM 9278 / NBRC 100436 / V24Sta) (Thermoproteus neutrophilus) protein is Large ribosomal subunit protein eL8.